Here is a 433-residue protein sequence, read N- to C-terminus: Chaperone SurA (433 aa).

The first 24 residues, 1 to 24 (MDGIKLLLSIIILYFYTYINCAIA), serve as a signal peptide directing secretion. PpiC domains follow at residues 173 to 274 (NTTF…KVHD) and 285 to 385 (ITEV…QLQN).

The protein resides in the periplasm. The catalysed reaction is [protein]-peptidylproline (omega=180) = [protein]-peptidylproline (omega=0). Its function is as follows. Chaperone involved in the correct folding and assembly of outer membrane proteins. Recognizes specific patterns of aromatic residues and the orientation of their side chains, which are found more frequently in integral outer membrane proteins. May act in both early periplasmic and late outer membrane-associated steps of protein maturation. This Baumannia cicadellinicola subsp. Homalodisca coagulata protein is Chaperone SurA.